The following is a 192-amino-acid chain: Orotate phosphoribosyltransferase (192 aa).

5-phospho-alpha-D-ribose 1-diphosphate is bound at residue 116 to 124 (EDIVTTGLS). The orotate site is built by Thr120 and Arg148.

Belongs to the purine/pyrimidine phosphoribosyltransferase family. PyrE subfamily. As to quaternary structure, homodimer. Mg(2+) is required as a cofactor.

It catalyses the reaction orotidine 5'-phosphate + diphosphate = orotate + 5-phospho-alpha-D-ribose 1-diphosphate. The protein operates within pyrimidine metabolism; UMP biosynthesis via de novo pathway; UMP from orotate: step 1/2. Functionally, catalyzes the transfer of a ribosyl phosphate group from 5-phosphoribose 1-diphosphate to orotate, leading to the formation of orotidine monophosphate (OMP). The sequence is that of Orotate phosphoribosyltransferase from Bartonella henselae (strain ATCC 49882 / DSM 28221 / CCUG 30454 / Houston 1) (Rochalimaea henselae).